We begin with the raw amino-acid sequence, 202 residues long: Putative 3-methyladenine DNA glycosylase (202 aa).

This sequence belongs to the DNA glycosylase MPG family.

The chain is Putative 3-methyladenine DNA glycosylase from Staphylococcus haemolyticus (strain JCSC1435).